The sequence spans 87 residues: MANIKSAKKRAIQSEKARKHNASRRSMMRTFIKKVYAAIEAGDKAAAQKAFNEMQPIVDRQAAKGLIHKNKAARHKANLTAQINKLA.

Residues 1–26 (MANIKSAKKRAIQSEKARKHNASRRS) form a disordered region.

Belongs to the bacterial ribosomal protein bS20 family.

Functionally, binds directly to 16S ribosomal RNA. The protein is Small ribosomal subunit protein bS20 of Escherichia coli O17:K52:H18 (strain UMN026 / ExPEC).